A 130-amino-acid chain; its full sequence is Small ribosomal subunit protein uS11 (130 aa).

Belongs to the universal ribosomal protein uS11 family. In terms of assembly, part of the 30S ribosomal subunit. Interacts with proteins S7 and S18. Binds to IF-3.

Located on the platform of the 30S subunit, it bridges several disparate RNA helices of the 16S rRNA. Forms part of the Shine-Dalgarno cleft in the 70S ribosome. The sequence is that of Small ribosomal subunit protein uS11 from Acidiphilium cryptum (strain JF-5).